Here is a 360-residue protein sequence, read N- to C-terminus: Chorismate synthase (360 aa).

NADP(+)-binding residues include Arg-48 and Arg-54. FMN-binding positions include 125-127, 246-247, Gly-286, 301-305, and Arg-327; these read RSS, NA, and KPTSS.

Belongs to the chorismate synthase family. As to quaternary structure, homotetramer. FMNH2 is required as a cofactor.

It catalyses the reaction 5-O-(1-carboxyvinyl)-3-phosphoshikimate = chorismate + phosphate. It functions in the pathway metabolic intermediate biosynthesis; chorismate biosynthesis; chorismate from D-erythrose 4-phosphate and phosphoenolpyruvate: step 7/7. Catalyzes the anti-1,4-elimination of the C-3 phosphate and the C-6 proR hydrogen from 5-enolpyruvylshikimate-3-phosphate (EPSP) to yield chorismate, which is the branch point compound that serves as the starting substrate for the three terminal pathways of aromatic amino acid biosynthesis. This reaction introduces a second double bond into the aromatic ring system. The polypeptide is Chorismate synthase (Glaesserella parasuis serovar 5 (strain SH0165) (Haemophilus parasuis)).